The primary structure comprises 221 residues: UPF0758 protein NTHI1125 (221 aa).

Residues 98–221 (PIINDLETVK…CYSFAENCLL (124 aa)) form the MPN domain. Residues H170, H172, and D183 each contribute to the Zn(2+) site. A JAMM motif motif is present at residues 170 to 183 (HNHPSGITEPSYSD).

The protein belongs to the UPF0758 family.

The sequence is that of UPF0758 protein NTHI1125 from Haemophilus influenzae (strain 86-028NP).